The chain runs to 404 residues: Acetate kinase (404 aa).

Asn-7 serves as a coordination point for Mg(2+). Lys-14 provides a ligand contact to ATP. Substrate is bound at residue Arg-91. The active-site Proton donor/acceptor is Asp-148. ATP is bound by residues 208–212 (HLGNG) and 283–285 (DLR). Glu-388 provides a ligand contact to Mg(2+).

The protein belongs to the acetokinase family. Homodimer. It depends on Mg(2+) as a cofactor. Mn(2+) is required as a cofactor.

The protein resides in the cytoplasm. The enzyme catalyses acetate + ATP = acetyl phosphate + ADP. Its pathway is metabolic intermediate biosynthesis; acetyl-CoA biosynthesis; acetyl-CoA from acetate: step 1/2. Its function is as follows. Catalyzes the formation of acetyl phosphate from acetate and ATP. Can also catalyze the reverse reaction. The sequence is that of Acetate kinase from Borrelia turicatae (strain 91E135).